The chain runs to 873 residues: Bifunctional heparan sulfate N-deacetylase/N-sulfotransferase 3 (873 aa).

Over 1–13 (MSFIMKPHRHFQR) the chain is Cytoplasmic. The chain crosses the membrane as a helical; Signal-anchor for type II membrane protein span at residues 14–34 (TLILLATFCMVSIIISAYYLY). Over 35 to 873 (SGYKQESEVS…WLRQELQKVR (839 aa)) the chain is Lumenal. A heparan sulfate N-deacetylase 3 region spans residues 36-589 (GYKQESEVSG…KRHRDIWSKE (554 aa)). N-linked (GlcNAc...) asparagine glycosylation is found at N146, N226, N342, and N392. The tract at residues 590–873 (KTCDRLPKFL…WLRQELQKVR (284 aa)) is heparan sulfate N-sulfotransferase 3. Residue K605 is the For sulfotransferase activity of the active site. A 3'-phosphoadenylyl sulfate-binding site is contributed by 605-609 (KTGTT). N658 carries an N-linked (GlcNAc...) asparagine glycan. S703 lines the 3'-phosphoadenylyl sulfate pocket. N-linked (GlcNAc...) asparagine glycosylation is present at N794. A disulfide bridge links C809 with C819. 824–828 (KGRKY) serves as a coordination point for 3'-phosphoadenylyl sulfate.

This sequence belongs to the sulfotransferase 1 family. NDST subfamily. In terms of assembly, monomer. In terms of tissue distribution, strongly expressed strongly in brain. Expressed at high level at embryonic day 11 compared to other stages of development. Weakly expressed in adult heart, kidney, muscle, endothelial cells and testis but not in other tissues.

Its subcellular location is the golgi apparatus membrane. It carries out the reaction alpha-D-glucosaminyl-[heparan sulfate](n) + 3'-phosphoadenylyl sulfate = N-sulfo-alpha-D-glucosaminyl-[heparan sulfate](n) + adenosine 3',5'-bisphosphate + 2 H(+). Its pathway is glycan metabolism; heparan sulfate biosynthesis. It participates in glycan metabolism; heparin biosynthesis. In terms of biological role, essential bifunctional enzyme that catalyzes both the N-deacetylation and the N-sulfation of glucosamine (GlcNAc) of the glycosaminoglycan in heparan sulfate. Modifies the GlcNAc-GlcA disaccharide repeating sugar backbone to make N-sulfated heparosan, a prerequisite substrate for later modifications in heparin biosynthesis. Has high deacetylase activity but low sulfotransferase activity. In Mus musculus (Mouse), this protein is Bifunctional heparan sulfate N-deacetylase/N-sulfotransferase 3 (Ndst3).